The sequence spans 439 residues: Adenylosuccinate synthetase (439 aa).

GTP is bound by residues 25–31 (GDEGKGK), 53–55 (GHT), and Lys-62. Asp-26 (proton acceptor) is an active-site residue. Positions 26 and 53 each coordinate Mg(2+). Residues 26–29 (DEGK) and 51–54 (NAGH) contribute to the IMP site. Residue His-54 is the Proton donor of the active site. 4 residues coordinate IMP: Thr-141, Arg-155, Asn-232, and Thr-247. Thr-307 provides a ligand contact to GTP. Position 307 to 313 (307 to 313 (TTTKRPR)) interacts with substrate. Arg-311 contacts IMP. GTP is bound by residues Arg-313, 339–341 (KLD), and 425–427 (GVG).

Belongs to the adenylosuccinate synthetase family. Homodimer. It depends on Mg(2+) as a cofactor.

The protein resides in the cytoplasm. The enzyme catalyses IMP + L-aspartate + GTP = N(6)-(1,2-dicarboxyethyl)-AMP + GDP + phosphate + 2 H(+). It participates in purine metabolism; AMP biosynthesis via de novo pathway; AMP from IMP: step 1/2. Plays an important role in the salvage pathway for purine nucleotide biosynthesis. Catalyzes the first commited step in the biosynthesis of AMP from IMP. The polypeptide is Adenylosuccinate synthetase (ADSS) (Plasmodium berghei (strain Anka)).